We begin with the raw amino-acid sequence, 354 residues long: Ornithine transcarbamylase, mitochondrial (354 aa).

A mitochondrion-targeting transit peptide spans 1–32 (MLSNLRILLNKAALRKAHTSMVRNFRYGKPVQ). K70 carries the post-translational modification N6-acetyllysine; alternate. Position 70 is an N6-succinyllysine; alternate (K70). K80 carries the post-translational modification N6-succinyllysine. K88 bears the N6-acetyllysine; alternate mark. At K88 the chain carries N6-succinyllysine; alternate. Carbamoyl phosphate is bound at residue 90–93 (STRT). At S133 the chain carries Phosphoserine. R141 serves as a coordination point for carbamoyl phosphate. K144 is subject to N6-acetyllysine; alternate. The residue at position 144 (K144) is an N6-succinyllysine; alternate. Residues H168 and Q171 each coordinate carbamoyl phosphate. N199 is a binding site for L-ornithine. N6-acetyllysine; alternate occurs at positions 221, 231, and 238. N6-succinyllysine; alternate occurs at positions 221, 231, and 238. Positions 263, 267, and 268 each coordinate L-ornithine. N6-succinyllysine is present on residues K274 and K289. K292 is subject to N6-acetyllysine; alternate. K292 carries the N6-succinyllysine; alternate modification. The active-site Proton acceptor is the C303. Position 303 to 304 (303 to 304 (CL)) interacts with carbamoyl phosphate. K307 carries the post-translational modification N6-acetyllysine; alternate. K307 bears the N6-succinyllysine; alternate mark. Carbamoyl phosphate is bound at residue R330.

It belongs to the aspartate/ornithine carbamoyltransferase superfamily. OTCase family. In terms of assembly, homotrimer. Acetylation at Lys-88 negatively regulates ornithine carbamoyltransferase activity in response to nutrient signals.

It is found in the mitochondrion matrix. The enzyme catalyses carbamoyl phosphate + L-ornithine = L-citrulline + phosphate + H(+). Its pathway is nitrogen metabolism; urea cycle; L-citrulline from L-ornithine and carbamoyl phosphate: step 1/1. With respect to regulation, negatively regulated by lysine acetylation. Catalyzes the second step of the urea cycle, the condensation of carbamoyl phosphate with L-ornithine to form L-citrulline. The urea cycle ensures the detoxification of ammonia by converting it to urea for excretion. The protein is Ornithine transcarbamylase, mitochondrial of Rattus norvegicus (Rat).